The following is a 439-amino-acid chain: Proline--tRNA ligase (439 aa).

It belongs to the class-II aminoacyl-tRNA synthetase family. ProS type 2 subfamily. As to quaternary structure, homodimer.

The protein localises to the cytoplasm. It carries out the reaction tRNA(Pro) + L-proline + ATP = L-prolyl-tRNA(Pro) + AMP + diphosphate. Functionally, catalyzes the attachment of proline to tRNA(Pro) in a two-step reaction: proline is first activated by ATP to form Pro-AMP and then transferred to the acceptor end of tRNA(Pro). The polypeptide is Proline--tRNA ligase (Rhodopseudomonas palustris (strain BisB18)).